The following is a 362-amino-acid chain: E3 ubiquitin-protein ligase TM129 (362 aa).

Topologically, residues 1–6 are lumenal; that stretch reads MESPEV. The helical transmembrane segment at 7-27 threads the bilayer; that stretch reads TFTLAYVVFSVCFVFTPNEFH. The Cytoplasmic segment spans residues 28 to 56; it reads SAGITVQNLLSGWLGSEDVAFVHYHIRRS. A helical transmembrane segment spans residues 57–77; the sequence is TATLLTHSLLPMGYFIGMCFA. Residues 78-94 lie on the Lumenal side of the membrane; the sequence is APEKELYNVYKAADGWK. A helical membrane pass occupies residues 95 to 115; sequence VFVLITVLLPVTTSILAFYWS. Topologically, residues 116–362 are cytoplasmic; the sequence is QKRWGNHPLA…FCIVDVCIVR (247 aa). An RING-type; degenerate zinc finger spans residues 285–350; sequence CIGCMQTNAN…SSHVPCPTCR (66 aa).

The protein belongs to the TMEM129 family. As to quaternary structure, integral component of ER-resident dislocation complexes.

The protein localises to the endoplasmic reticulum membrane. It carries out the reaction S-ubiquitinyl-[E2 ubiquitin-conjugating enzyme]-L-cysteine + [acceptor protein]-L-lysine = [E2 ubiquitin-conjugating enzyme]-L-cysteine + N(6)-ubiquitinyl-[acceptor protein]-L-lysine.. The protein operates within protein modification; protein ubiquitination. E3 ubiquitin-protein ligase involved in ER-associated protein degradation, preferentially associates with the E2 enzyme UBE2J2. This chain is E3 ubiquitin-protein ligase TM129 (tmem129), found in Xenopus tropicalis (Western clawed frog).